The following is a 51-amino-acid chain: UPF0181 protein VVA0806 (51 aa).

The protein belongs to the UPF0181 family.

This Vibrio vulnificus (strain YJ016) protein is UPF0181 protein VVA0806.